Here is a 154-residue protein sequence, read N- to C-terminus: Putative esterase AF_2264 (154 aa).

This sequence belongs to the thioesterase PaaI family.

This is Putative esterase AF_2264 from Archaeoglobus fulgidus (strain ATCC 49558 / DSM 4304 / JCM 9628 / NBRC 100126 / VC-16).